We begin with the raw amino-acid sequence, 98 residues long: Toxin ParE1 (98 aa).

Belongs to the RelE toxin family.

Its function is as follows. Toxic component of a type II toxin-antitoxin (TA) system. Its toxic effect is neutralized by coexpression with cognate antitoxin ParD1. The protein is Toxin ParE1 (parE1) of Mycobacterium tuberculosis (strain CDC 1551 / Oshkosh).